The sequence spans 207 residues: Tereporin-Ts1 (207 aa).

A signal peptide spans 1–11; it reads VIFALVLGNAS. The interval 35–54 is N-terminal region; the sequence is SAGTSLASTILSGLAASGYR. Phosphocholine-binding residues include glycine 111, serine 129, proline 131, tyrosine 164, and tyrosine 165.

It belongs to the actinoporin family. Conoidea subfamily. Octamer or nonamer in membranes. Monomer in the soluble state. As to expression, expressed by the venom duct.

The protein resides in the secreted. The protein localises to the nematocyst. It is found in the target cell membrane. Pore-forming protein that forms pores of around 1 nm and causes cardiac stimulation and cytolysis. This chain is Tereporin-Ts1, found in Terebra subulata (Chocolate spotted auger).